A 378-amino-acid chain; its full sequence is N-acetyldiaminopimelate deacetylase (378 aa).

The active site involves Asp-65. Glu-124 (proton acceptor) is an active-site residue.

It belongs to the peptidase M20A family. N-acetyldiaminopimelate deacetylase subfamily.

The catalysed reaction is N-acetyl-(2S,6S)-2,6-diaminopimelate + H2O = (2S,6S)-2,6-diaminopimelate + acetate. The protein operates within amino-acid biosynthesis; L-lysine biosynthesis via DAP pathway; LL-2,6-diaminopimelate from (S)-tetrahydrodipicolinate (acetylase route): step 3/3. Catalyzes the conversion of N-acetyl-diaminopimelate to diaminopimelate and acetate. This chain is N-acetyldiaminopimelate deacetylase, found in Anoxybacillus flavithermus (strain DSM 21510 / WK1).